The sequence spans 188 residues: MKISANSIRTGNILVYSNDLWVVSRTPEHTQPGKGGAYVQVEMKNLKTGTKRNERFSSSDYLEKAELEQKDYQFLYFEGNDLVLMDIKHFDQINVPKEILEEKLPFLAENMIVKVEFYNEKPLNIELPPTVIIEISETDPVIKGATATASYKPAILTNGIKVKVPQYLEIGEKIVVKTDDMTYVERAK.

The protein belongs to the elongation factor P family.

It is found in the cytoplasm. Its pathway is protein biosynthesis; polypeptide chain elongation. Involved in peptide bond synthesis. Stimulates efficient translation and peptide-bond synthesis on native or reconstituted 70S ribosomes in vitro. Probably functions indirectly by altering the affinity of the ribosome for aminoacyl-tRNA, thus increasing their reactivity as acceptors for peptidyl transferase. In Rickettsia canadensis (strain McKiel), this protein is Elongation factor P.